A 768-amino-acid polypeptide reads, in one-letter code: Solabiose phosphorylase (768 aa).

The active-site Proton donor is aspartate 456.

It belongs to the glycosyl hydrolase 94 family.

It carries out the reaction solabiose + phosphate = D-galactose + alpha-D-glucose 1-phosphate. Catalyzes the reversible phosphorolysis of solabiose. Catalyzes the phosphorolysis and synthesis of solabiose through a sequential bi-bi mechanism involving the formation of a ternary complex. Is probably involved in the metabolism of solabiose released from solabiose-containing compounds. The chain is Solabiose phosphorylase from Paenibacillus borealis.